We begin with the raw amino-acid sequence, 567 residues long: MFS-type transporter poxA (567 aa).

Residues 1–23 (MPASDRTSETGDVEKVTAAETPK) are compositionally biased toward basic and acidic residues. Residues 1–24 (MPASDRTSETGDVEKVTAAETPKE) are disordered. The next 10 membrane-spanning stretches (helical) occupy residues 35–55 (ALTGLPLYTVLVGLGLALFLG), 77–97 (ADIGWYGAAYPLTMSSIQLLA), 108–128 (LVFLVFFGLFMLGSLLCGVAV), 141–161 (GAGAAGVLSGTLAIVSAVVPL), 165–185 (SLILGLMMSLVGTAVVLGPVI), 197–217 (WCFYLNLPCGGVTLLALILFF), 240–260 (LAGCLGFIPAVVMLLLALQWG), 271–291 (SATIIGLFCGAGVSLILFLIW), 311–331 (IIASCLYGFALLGGYVVVGYF), and 349–369 (VMLLPNVITNFISKAVIGVIV). Residue N370 is glycosylated (N-linked (GlcNAc...) asparagine). 4 helical membrane passes run 372-392 (TGYFNPWLFFGAAVLAIGSGL), 410-430 (ILQGAALGIIQAPTLGVQVAL), 436-456 (LIPVALSLVIFFQYFGSSIML), and 515-535 (AIAGVMWLSTAAALFGFLVSF). The disordered stretch occupies residues 547-567 (EENKKEAAEEEEEVKVAAVEA).

It belongs to the major facilitator superfamily. TCR/Tet family.

It is found in the cell membrane. Functionally, MFS-type transporter; part of the gene cluster that mediates the biosynthesis of oxaleimides, cytotoxic compounds containing an unusual disubstituted succinimide moiety. The sequence is that of MFS-type transporter poxA from Penicillium oxalicum (strain 114-2 / CGMCC 5302) (Penicillium decumbens).